The following is a 397-amino-acid chain: F-box protein At4g11590 (397 aa).

One can recognise an F-box domain in the interval 24-70; that stretch reads EKNFNDVPLDVAIEIFMRLPVKSVARFLLLSKFWAEIIRSRHFITSF.

Part of a SCF (ASK-cullin-F-box) protein ligase complex. Interacts with ASK16.

The protein resides in the nucleus. It functions in the pathway protein modification; protein ubiquitination. In terms of biological role, component of SCF(ASK-cullin-F-box) E3 ubiquitin ligase complexes, which may mediate the ubiquitination and subsequent proteasomal degradation of target proteins. The polypeptide is F-box protein At4g11590 (Arabidopsis thaliana (Mouse-ear cress)).